The primary structure comprises 634 residues: MMRTWMVYVVGLVGELYGSQVEETREMREMKEALERLFSRRLSDSEIEMVESLEDGGNFETRVLVPVIFHKDKVVVSPAARYRDIEKEERVYVEEVIRRLRSLVWHSMVYIYVPKNNDWIMDLICEVLEMSSPQRLDDVALYKDTGGKCGMKFVDLVNKMFKQNADMLIKFGDLLSNGAETRILELPDSLREDERRREVEMLQRVKEYGKMLCTEDKQKEIVEAQKIMCDACEQIWRREEDRKEFTMEIYSRYLNMKVMRGGVERDVEDPLIDHMDHYMLISTHKKYKCMDVVAELVRKVFVEDKDIEDSDVMSAVCSVRERKRLEEMREMEERKRKEEERAKNEEELLRMVEREEREKREESKGRGKKKRGNRGAGESKEESKGRGKRKRGNKGAGESKEEDRGEEGGVEAEDPLEEMAVGEAWRKKKGSGEKRISEEHHYKVHSRVLRWKKDAGEIKRELDEGYEKKWKNRSIEEIKEQKKVHDIVEVMKLLRDKEKCDRFFVRTGKYMKGKSERWKMVANGILEEGGEKKVGKVEVGLFKGEGGESVVYHLMFRPTETERTGRVGGSSFGKYDDVDEIKKEKSSDMFGFRYPSGVRCEMTSNRNEFRIEYRNRKNTSEVLRTLTILRIPET.

Basic and acidic residues-rich tracts occupy residues 354 to 365 and 397 to 407; these read REEREKREESKG and GESKEEDRGEE. Residues 354-438 are disordered; it reads REEREKREES…KGSGEKRISE (85 aa). Residues 408–417 are compositionally biased toward acidic residues; the sequence is GGVEAEDPLE.

It belongs to the UPF0329 family.

This Encephalitozoon cuniculi (strain GB-M1) (Microsporidian parasite) protein is UPF0329 protein ECU07_1850/ECU10_0050.